We begin with the raw amino-acid sequence, 456 residues long: tRNA modification GTPase MnmE (456 aa).

Arg-21, Glu-85, and Lys-124 together coordinate (6S)-5-formyl-5,6,7,8-tetrahydrofolate. The TrmE-type G domain occupies 220-379 (QLRIVLYGEP…LLDEIQKKAA (160 aa)). Residue Asn-230 participates in K(+) binding. GTP contacts are provided by residues 230 to 235 (NTGKSS), 249 to 255 (SEIPGTT), and 274 to 277 (DTAG). Residue Ser-234 participates in Mg(2+) binding. Positions 249, 251, and 254 each coordinate K(+). Residue Thr-255 participates in Mg(2+) binding. Lys-456 is a binding site for (6S)-5-formyl-5,6,7,8-tetrahydrofolate.

Belongs to the TRAFAC class TrmE-Era-EngA-EngB-Septin-like GTPase superfamily. TrmE GTPase family. As to quaternary structure, homodimer. Heterotetramer of two MnmE and two MnmG subunits. K(+) is required as a cofactor.

It is found in the cytoplasm. In terms of biological role, exhibits a very high intrinsic GTPase hydrolysis rate. Involved in the addition of a carboxymethylaminomethyl (cmnm) group at the wobble position (U34) of certain tRNAs, forming tRNA-cmnm(5)s(2)U34. In Leptospira borgpetersenii serovar Hardjo-bovis (strain JB197), this protein is tRNA modification GTPase MnmE.